The sequence spans 368 residues: MIDKLAREELVDMVPYQSARRLFASGDNEQANSRTWLNANEAPGQGQYQLSSENINRYPDFQPQALLKAYSNYCNLPVDNILATRGADEGIELIIRSFCRAYQDSVLICPPTYGMYAISAENHGAGIISVPLVNTPEAQCQLDLEGLKQQVGKAKVVFLCSPGNPTGNTLSSAQIKAAIEIFKDSAMVVVDEAYYEYTNKELGAEQVNIKLISQYDNVIILRTLSKAFALAGLRCGFTLSNKAVITLLSKVIAPYPIAAPVAEIASKVLTNDLDVMQARVISANSLREQLSEWLKQQKWCSDVFDSNANFVLFRCNNIDEKNKVFNLLVEHNILIRDQSKQQQLENCLRISIGSEDEIAQLKQLLETL.

Position 226 is an N6-(pyridoxal phosphate)lysine (lysine 226).

The protein belongs to the class-II pyridoxal-phosphate-dependent aminotransferase family. Histidinol-phosphate aminotransferase subfamily. Homodimer. Pyridoxal 5'-phosphate serves as cofactor.

The catalysed reaction is L-histidinol phosphate + 2-oxoglutarate = 3-(imidazol-4-yl)-2-oxopropyl phosphate + L-glutamate. It functions in the pathway amino-acid biosynthesis; L-histidine biosynthesis; L-histidine from 5-phospho-alpha-D-ribose 1-diphosphate: step 7/9. This Colwellia psychrerythraea (strain 34H / ATCC BAA-681) (Vibrio psychroerythus) protein is Histidinol-phosphate aminotransferase.